The chain runs to 465 residues: Cysteine--tRNA ligase (465 aa).

A Zn(2+)-binding site is contributed by Cys29. The short motif at 31-41 (PTVYNYIHIGN) is the 'HIGH' region element. Residues Cys209, His234, and Glu238 each coordinate Zn(2+). The 'KMSKS' region motif lies at 266 to 270 (KMSKS). Position 269 (Lys269) interacts with ATP. Ser270 is modified (phosphoserine).

It belongs to the class-I aminoacyl-tRNA synthetase family. In terms of assembly, monomer. Zn(2+) serves as cofactor.

It is found in the cytoplasm. The enzyme catalyses tRNA(Cys) + L-cysteine + ATP = L-cysteinyl-tRNA(Cys) + AMP + diphosphate. The sequence is that of Cysteine--tRNA ligase from Bacillus cereus (strain ATCC 10987 / NRS 248).